Here is a 503-residue protein sequence, read N- to C-terminus: Aspartyl/glutamyl-tRNA(Asn/Gln) amidotransferase subunit B (503 aa).

It belongs to the GatB/GatE family. GatB subfamily. As to quaternary structure, heterotrimer of A, B and C subunits.

The enzyme catalyses L-glutamyl-tRNA(Gln) + L-glutamine + ATP + H2O = L-glutaminyl-tRNA(Gln) + L-glutamate + ADP + phosphate + H(+). It carries out the reaction L-aspartyl-tRNA(Asn) + L-glutamine + ATP + H2O = L-asparaginyl-tRNA(Asn) + L-glutamate + ADP + phosphate + 2 H(+). Functionally, allows the formation of correctly charged Asn-tRNA(Asn) or Gln-tRNA(Gln) through the transamidation of misacylated Asp-tRNA(Asn) or Glu-tRNA(Gln) in organisms which lack either or both of asparaginyl-tRNA or glutaminyl-tRNA synthetases. The reaction takes place in the presence of glutamine and ATP through an activated phospho-Asp-tRNA(Asn) or phospho-Glu-tRNA(Gln). The sequence is that of Aspartyl/glutamyl-tRNA(Asn/Gln) amidotransferase subunit B from Jannaschia sp. (strain CCS1).